The following is a 370-amino-acid chain: BRISC and BRCA1-A complex member 1 (370 aa).

Disordered regions lie at residues methionine 1 to valine 69 and threonine 90 to leucine 126. A compositionally biased stretch (basic and acidic residues) spans glycine 11 to proline 20. Positions serine 35–serine 45 are enriched in low complexity. Residues valine 137–leucine 340 form a VWFA-like region.

This sequence belongs to the BABAM1 family. As to quaternary structure, component of the ARISC complex, at least composed of uimc1/rap80, abraxas1, brcc3/brcc36, babam2 and babam1/nba1. Component of the BRCA1-A complex, at least composed of bard1, uimc1/rap80, abraxas1, brcc3/brcc36, babam2 and babam1/nba1. In the BRCA1-A complex, interacts directly with abraxas1 and babam2. Component of the BRISC complex, at least composed of abraxas2, brcc3/brcc36, babam2 and babam1/nba1.

It is found in the cytoplasm. The protein resides in the nucleus. Its function is as follows. Component of the BRCA1-A complex, a complex that specifically recognizes 'Lys-63'-linked ubiquitinated histones H2A and H2AX at DNA lesion sites. The BRCA1-A complex also possesses deubiquitinase activity that specifically removes 'Lys-63'-linked ubiquitin on histones H2A and H2AX. In the BRCA1-A complex, it is required for the complex integrity and its localization at DNA double-strand breaks (DSBs). Component of the BRISC complex, a multiprotein complex that specifically cleaves 'Lys-63'-linked ubiquitin in various substrates. In these 2 complexes, it is probably required to maintain the stability of babam2 and help the 'Lys-63'-linked deubiquitinase activity mediated by brcc3/brcc36 component. The BRISC complex is required for normal mitotic spindle assembly and microtubule attachment to kinetochores via its role in deubiquitinating numa1. This chain is BRISC and BRCA1-A complex member 1 (babam1), found in Danio rerio (Zebrafish).